We begin with the raw amino-acid sequence, 509 residues long: Probable aspartic-type endopeptidase CTSD (509 aa).

The signal sequence occupies residues 1 to 21 (MQFLWLCLLSAVTLQFTGTLA). One can recognise a Peptidase A1 domain in the interval 102-408 (YFSEVKVGSE…DFDKNRVGLA (307 aa)). D120 is an active-site residue. Residue N174 is glycosylated (N-linked (GlcNAc...) asparagine). The active site involves D302. N361 carries an N-linked (GlcNAc...) asparagine glycan. A disordered region spans residues 451–489 (NKAPSGGSPGLPAESGSDSTTNGEATNGATSSPNSSSSV). Polar residues predominate over residues 466-480 (GSDSTTNGEATNGAT). Residue N484 is glycosylated (N-linked (GlcNAc...) asparagine). A lipid anchor (GPI-anchor amidated serine) is attached at S485. The propeptide at 486–509 (SSSVLTPTWLTLAVFFAIGSSLWS) is removed in mature form.

Belongs to the peptidase A1 family.

The protein resides in the cell membrane. Its function is as follows. Probable GPI-anchored aspartic-type endopeptidase which contributes to virulence. In Arthroderma benhamiae (strain ATCC MYA-4681 / CBS 112371) (Trichophyton mentagrophytes), this protein is Probable aspartic-type endopeptidase CTSD (CTSD).